Reading from the N-terminus, the 393-residue chain is Arginine biosynthesis bifunctional protein ArgJ (393 aa).

6 residues coordinate substrate: threonine 143, lysine 168, threonine 179, glutamate 265, asparagine 388, and threonine 393. Threonine 179 (nucleophile) is an active-site residue.

It belongs to the ArgJ family. In terms of assembly, heterotetramer of two alpha and two beta chains.

It localises to the cytoplasm. It carries out the reaction N(2)-acetyl-L-ornithine + L-glutamate = N-acetyl-L-glutamate + L-ornithine. The enzyme catalyses L-glutamate + acetyl-CoA = N-acetyl-L-glutamate + CoA + H(+). Its pathway is amino-acid biosynthesis; L-arginine biosynthesis; L-ornithine and N-acetyl-L-glutamate from L-glutamate and N(2)-acetyl-L-ornithine (cyclic): step 1/1. It functions in the pathway amino-acid biosynthesis; L-arginine biosynthesis; N(2)-acetyl-L-ornithine from L-glutamate: step 1/4. Functionally, catalyzes two activities which are involved in the cyclic version of arginine biosynthesis: the synthesis of N-acetylglutamate from glutamate and acetyl-CoA as the acetyl donor, and of ornithine by transacetylation between N(2)-acetylornithine and glutamate. The sequence is that of Arginine biosynthesis bifunctional protein ArgJ from Syntrophotalea carbinolica (strain DSM 2380 / NBRC 103641 / GraBd1) (Pelobacter carbinolicus).